The primary structure comprises 407 residues: uncharacterized protein (407 aa).

This is an uncharacterized protein from Saimiriine herpesvirus 2 (strain 11) (SaHV-2).